The sequence spans 406 residues: 5-methylthioadenosine/S-adenosylhomocysteine deaminase (406 aa).

Positions 55 and 57 each coordinate Zn(2+). Glu-84, Arg-136, Arg-148, and His-173 together coordinate substrate. Zn(2+) is bound at residue His-200. Residues Glu-203 and Asp-279 each contribute to the substrate site. Asp-279 lines the Zn(2+) pocket.

This sequence belongs to the metallo-dependent hydrolases superfamily. MTA/SAH deaminase family. The cofactor is Zn(2+).

It carries out the reaction S-adenosyl-L-homocysteine + H2O + H(+) = S-inosyl-L-homocysteine + NH4(+). The catalysed reaction is S-methyl-5'-thioadenosine + H2O + H(+) = S-methyl-5'-thioinosine + NH4(+). Its function is as follows. Catalyzes the deamination of 5-methylthioadenosine and S-adenosyl-L-homocysteine into 5-methylthioinosine and S-inosyl-L-homocysteine, respectively. Is also able to deaminate adenosine. Adenosine-5-monophosphate (AMP) and S-adenosyl-L-methionine (SAM) are not enzyme substrates. The sequence is that of 5-methylthioadenosine/S-adenosylhomocysteine deaminase (mtaD) from Thermotoga maritima (strain ATCC 43589 / DSM 3109 / JCM 10099 / NBRC 100826 / MSB8).